The primary structure comprises 432 residues: Probable protein phosphatase 2C 33 (432 aa).

A PPM-type phosphatase domain is found at 27-298; sequence GGGSERPLVR…DDTTCVVVDI (272 aa). D74, G75, D250, and D289 together coordinate Mn(2+).

Belongs to the PP2C family. The cofactor is Mg(2+). Mn(2+) serves as cofactor.

It catalyses the reaction O-phospho-L-seryl-[protein] + H2O = L-seryl-[protein] + phosphate. The enzyme catalyses O-phospho-L-threonyl-[protein] + H2O = L-threonyl-[protein] + phosphate. This is Probable protein phosphatase 2C 33 from Oryza sativa subsp. japonica (Rice).